We begin with the raw amino-acid sequence, 1873 residues long: Kinesin-related protein 8 (1873 aa).

The region spanning 13–413 is the Kinesin motor domain; sequence CVRVALRVRP…LKYAYRARNI (401 aa). 93–100 contributes to the ATP binding site; that stretch reads GQTGSGKT. Disordered stretches follow at residues 231–302, 463–567, 778–797, 841–891, 930–1008, 1179–1207, 1244–1267, 1328–1360, and 1403–1467; these read NSPV…DERN, VSIP…SPTS, LDKD…YYED, KIDS…ARKT, KQRV…TEQL, PQPL…QRSS, LPSQ…STSS, TTTT…NNSS, and NNIT…PRPD. Over residues 232-247 the composition is skewed to low complexity; that stretch reads SPVTSSSTSSTSTSSS. Acidic residues predominate over residues 280–297; the sequence is IDEDEEDDEEDEDDDIMS. The span at 473 to 567 shows a compositional bias: low complexity; the sequence is TPTLTNNNNN…NNTATPSPTS (95 aa). Residues 715-933 adopt a coiled-coil conformation; that stretch reads FENDSEELSD…KEIEVHKQRV (219 aa). Composition is skewed to low complexity over residues 937–1005, 1182–1200, 1244–1254, 1348–1358, and 1423–1454; these read INSK…TPTT, LQSQ…NSEQ, LPSQQQLSSSQ, NNTNNNNNNNN, and SLQS…SNNN. WD repeat units lie at residues 1506–1546, 1548–1587, 1589–1628, 1636–1673, and 1677–1714; these read GHDG…NMLD, SSPG…NTNL, IFKT…KPLK, HHTG…LAQK, and PHHD…NLIN. Residues 1758 to 1780 form a disordered region; that stretch reads NNNNNNSSNNNKSSSAPSSTTSS. WD repeat units lie at residues 1805 to 1842 and 1844 to 1873; these read AHND…NSLL and GHES…IWKC.

The protein belongs to the TRAFAC class myosin-kinesin ATPase superfamily. Kinesin family.

Its subcellular location is the cytoplasm. It localises to the cytoskeleton. Functionally, microtubule-associated force-producing protein that plays a role in organelle transport. Its motor activity is directed toward the microtubule's plus end. Cooperates with kif10 and dynein to organize interphase microtubules. This is Kinesin-related protein 8 (kif8) from Dictyostelium discoideum (Social amoeba).